The sequence spans 616 residues: Chaperone protein HscA (616 aa).

The protein belongs to the heat shock protein 70 family.

Its function is as follows. Chaperone involved in the maturation of iron-sulfur cluster-containing proteins. Has a low intrinsic ATPase activity which is markedly stimulated by HscB. Involved in the maturation of IscU. The sequence is that of Chaperone protein HscA from Enterobacter sp. (strain 638).